A 170-amino-acid polypeptide reads, in one-letter code: Adenine phosphoribosyltransferase (170 aa).

The protein belongs to the purine/pyrimidine phosphoribosyltransferase family. In terms of assembly, homodimer.

Its subcellular location is the cytoplasm. It carries out the reaction AMP + diphosphate = 5-phospho-alpha-D-ribose 1-diphosphate + adenine. It functions in the pathway purine metabolism; AMP biosynthesis via salvage pathway; AMP from adenine: step 1/1. In terms of biological role, catalyzes a salvage reaction resulting in the formation of AMP, that is energically less costly than de novo synthesis. The chain is Adenine phosphoribosyltransferase from Kosmotoga olearia (strain ATCC BAA-1733 / DSM 21960 / TBF 19.5.1).